A 514-amino-acid chain; its full sequence is ATP synthase subunit alpha (514 aa).

170 to 177 (GDRQIGKT) is an ATP binding site.

Belongs to the ATPase alpha/beta chains family. As to quaternary structure, F-type ATPases have 2 components, CF(1) - the catalytic core - and CF(0) - the membrane proton channel. CF(1) has five subunits: alpha(3), beta(3), gamma(1), delta(1), epsilon(1). CF(0) has three main subunits: a(1), b(2) and c(9-12). The alpha and beta chains form an alternating ring which encloses part of the gamma chain. CF(1) is attached to CF(0) by a central stalk formed by the gamma and epsilon chains, while a peripheral stalk is formed by the delta and b chains.

The protein localises to the cell inner membrane. The catalysed reaction is ATP + H2O + 4 H(+)(in) = ADP + phosphate + 5 H(+)(out). In terms of biological role, produces ATP from ADP in the presence of a proton gradient across the membrane. The alpha chain is a regulatory subunit. The sequence is that of ATP synthase subunit alpha from Marinobacter nauticus (strain ATCC 700491 / DSM 11845 / VT8) (Marinobacter aquaeolei).